We begin with the raw amino-acid sequence, 124 residues long: Small ribosomal subunit protein bS6 (124 aa).

The protein belongs to the bacterial ribosomal protein bS6 family.

In terms of biological role, binds together with bS18 to 16S ribosomal RNA. This Actinobacillus pleuropneumoniae serotype 5b (strain L20) protein is Small ribosomal subunit protein bS6.